The chain runs to 232 residues: Ribose-5-phosphate isomerase A (232 aa).

Substrate-binding positions include 29–32 (TGST), 84–87 (DGAD), and 97–100 (KGGG). The active-site Proton acceptor is glutamate 106. A substrate-binding site is contributed by lysine 124.

This sequence belongs to the ribose 5-phosphate isomerase family. In terms of assembly, homodimer.

The catalysed reaction is aldehydo-D-ribose 5-phosphate = D-ribulose 5-phosphate. It participates in carbohydrate degradation; pentose phosphate pathway; D-ribose 5-phosphate from D-ribulose 5-phosphate (non-oxidative stage): step 1/1. Its function is as follows. Catalyzes the reversible conversion of ribose-5-phosphate to ribulose 5-phosphate. This chain is Ribose-5-phosphate isomerase A, found in Brucella suis biovar 1 (strain 1330).